A 564-amino-acid polypeptide reads, in one-letter code: Septation ring formation regulator EzrA (564 aa).

The Extracellular portion of the chain corresponds to 1 to 4 (MVLF). A helical transmembrane segment spans residues 5 to 23 (IILAILVVILIAIGVLFYM). Over 24–564 (RSNKRNLIEK…KHIEEQVIKE (541 aa)) the chain is Cytoplasmic. Coiled-coil stretches lie at residues 84–126 (VEEK…HQVT), 165–223 (EAAE…LIRE), 271–303 (MISR…YEVK), and 350–435 (VRQF…RRLL).

It belongs to the EzrA family.

It is found in the cell membrane. Its function is as follows. Negative regulator of FtsZ ring formation; modulates the frequency and position of FtsZ ring formation. Inhibits FtsZ ring formation at polar sites. Interacts either with FtsZ or with one of its binding partners to promote depolymerization. In Staphylococcus epidermidis (strain ATCC 35984 / DSM 28319 / BCRC 17069 / CCUG 31568 / BM 3577 / RP62A), this protein is Septation ring formation regulator EzrA.